The sequence spans 91 residues: N(2)-fixation sustaining protein CowN (91 aa).

It belongs to the CowN family.

In terms of biological role, is required to sustain N(2)-dependent growth in the presence of low levels of carbon monoxide (CO). Probably acts by protecting the N(2) fixation ability of the nitrogenase complex, which is inactivated in the presence of CO. The sequence is that of N(2)-fixation sustaining protein CowN from Gluconacetobacter diazotrophicus (strain ATCC 49037 / DSM 5601 / CCUG 37298 / CIP 103539 / LMG 7603 / PAl5).